A 437-amino-acid polypeptide reads, in one-letter code: Epsilon-sarcoglycan (437 aa).

At 1-317 (MQLPRWWELG…LKSRDYYTDF (317 aa)) the chain is on the extracellular side. N-linked (GlcNAc...) asparagine glycosylation is present at Asn-200. A helical transmembrane segment spans residues 318–338 (LITLAVPSAVALVLFLILAYI). The Cytoplasmic segment spans residues 339 to 437 (MCCRREGVEK…QQQTTGKWYP (99 aa)).

It belongs to the sarcoglycan alpha/epsilon family. N-glycosylated. Post-translationally, ubiquitinated, leading to its degradation by the proteasome.

The protein localises to the cell membrane. It is found in the sarcolemma. Its subcellular location is the cytoplasm. The protein resides in the cytoskeleton. It localises to the cell projection. The protein localises to the dendrite. It is found in the golgi apparatus. In terms of biological role, component of the sarcoglycan complex, a subcomplex of the dystrophin-glycoprotein complex which forms a link between the F-actin cytoskeleton and the extracellular matrix. The protein is Epsilon-sarcoglycan of Pongo abelii (Sumatran orangutan).